A 192-amino-acid polypeptide reads, in one-letter code: Fe/S biogenesis protein NfuA (192 aa).

[4Fe-4S] cluster-binding residues include C150 and C153.

The protein belongs to the NfuA family. Homodimer. It depends on [4Fe-4S] cluster as a cofactor.

Involved in iron-sulfur cluster biogenesis. Binds a 4Fe-4S cluster, can transfer this cluster to apoproteins, and thereby intervenes in the maturation of Fe/S proteins. Could also act as a scaffold/chaperone for damaged Fe/S proteins. This Buchnera aphidicola subsp. Acyrthosiphon pisum (strain 5A) protein is Fe/S biogenesis protein NfuA.